The chain runs to 252 residues: Flap endonuclease Xni (252 aa).

Aspartate 105 is a binding site for Mg(2+). The region spanning 161–251 (VESTQFIDYL…NVNLKQFRIE (91 aa)) is the 5'-3' exonuclease domain. Residues leucine 172, alanine 173, proline 181, valine 183, and isoleucine 186 each coordinate K(+). The interval 185 to 190 (GIGPKS) is interaction with DNA.

It belongs to the Xni family. Requires Mg(2+) as cofactor. It depends on K(+) as a cofactor.

In terms of biological role, has flap endonuclease activity. During DNA replication, flap endonucleases cleave the 5'-overhanging flap structure that is generated by displacement synthesis when DNA polymerase encounters the 5'-end of a downstream Okazaki fragment. The polypeptide is Flap endonuclease Xni (Shewanella halifaxensis (strain HAW-EB4)).